Here is a 142-residue protein sequence, read N- to C-terminus: uncharacterized protein (142 aa).

The tract at residues 70-94 (PKSVSNSKKKKEKAEKGLLRPTTKP) is disordered. A compositionally biased stretch (basic and acidic residues) spans 81–94 (EKAEKGLLRPTTKP).

This is an uncharacterized protein from Bacillus subtilis (strain 168).